We begin with the raw amino-acid sequence, 363 residues long: MMNEEDSTETKSLVITNGMFIIDDIERSKYNIHYKNVPGGGGTFAILGACIISSGNVTSKGLKWIVDRGSDFPKEVIREIDSWGTDVRFRDDFSRLTTKGLNYYEGSDDLRKFKFLTPKKQINVDDWISTFGQKIIDEMHAFHLLCSGSRCLDIINDLLRVKSSKGTKPIVIWEPFPDLCDFDHQNDIKSVMQRNDVTVILSPNAEESSRLFGLSSKEPTSLEECLALAHRFDDFMDENNMCILRCGALGSISVSEKFKNGRTYDHFPAYHFKTQSKVLDPTGGGNSFLGGFAVSYALTKSLDIASICGNIAAGAIIEQFGIPRYDPIAKTWNGITFLDRLKFYLSQSGLQYNINDLYKSLTR.

It to S.pombe SpAC4G8.14c.

Necessary for the structural stability of L-A double-stranded RNA-containing particles. Necessary for growth at 37 degrees Celsius as well as for maintenance of the killer plasmid. This is Protein MAK32 (MAK32) from Saccharomyces cerevisiae (strain ATCC 204508 / S288c) (Baker's yeast).